A 450-amino-acid chain; its full sequence is Trigger factor (450 aa).

The PPIase FKBP-type domain occupies 163–249 (EDFVLIDYQG…LKEIQEQILP (87 aa)). Acidic residues predominate over residues 431–443 (PEVETEVSESAAD). The segment at 431-450 (PEVETEVSESAADVEDKTDQ) is disordered.

It belongs to the FKBP-type PPIase family. Tig subfamily.

Its subcellular location is the cytoplasm. The enzyme catalyses [protein]-peptidylproline (omega=180) = [protein]-peptidylproline (omega=0). Functionally, involved in protein export. Acts as a chaperone by maintaining the newly synthesized protein in an open conformation. Functions as a peptidyl-prolyl cis-trans isomerase. This is Trigger factor from Desulforapulum autotrophicum (strain ATCC 43914 / DSM 3382 / VKM B-1955 / HRM2) (Desulfobacterium autotrophicum).